The primary structure comprises 499 residues: NADH-quinone oxidoreductase subunit 14 (499 aa).

Helical transmembrane passes span 9-29 (ILPEVVLAGYALAALMAGAYL), 37-57 (TLLWVTVAAFLVVAAMVGLGN), 76-96 (FAKVVTLVAAAGVLAMSADYM), 104-124 (FEFPIIVALAVLGMMFMVSAG), 126-146 (LLTLYMGLELQSLALYVVAAM), 161-181 (FVLGSLSSGLLLYGASLVYGF), 196-216 (AGHLSLGVLFGLVFMLVGLSF), 235-255 (PTPVTAFFATAPKVAAMALIA), 269-289 (WSQIVAALAVMSMFLGSIAGI), 301-321 (SSIAHMGFALVGLAAGTAIGV), 324-344 (MLLYMTIYAVMNIGTFAFILS), 369-389 (ALAMLVLMFSLAGVPPTLGFF), 402-422 (GMGWLAVLGVIASVIGAFYYL), and 446-466 (YLALMVPALAMLVGAISMFGV).

Belongs to the complex I subunit 2 family. In terms of assembly, NDH-1 is composed of at least 14 different subunits, Nqo1 to Nqo14. The complex has a L-shaped structure, with the hydrophobic arm (subunits Nqo7, Nqo8, Nqo10 to Nqo14) embedded in the inner membrane and the hydrophilic peripheral arm (subunits Nqo1 to Nqo6, Nqo9) protruding into the bacterial cytoplasm. The hydrophilic domain contains all the redox centers.

Its subcellular location is the cell inner membrane. It catalyses the reaction a quinone + NADH + 5 H(+)(in) = a quinol + NAD(+) + 4 H(+)(out). Its function is as follows. NDH-1 shuttles electrons from NADH, via FMN and iron-sulfur (Fe-S) centers, to quinones in the respiratory chain. The immediate electron acceptor for the enzyme in this species is believed to be ubiquinone. Couples the redox reaction to proton translocation (for every two electrons transferred, four hydrogen ions are translocated across the cytoplasmic membrane), and thus conserves the redox energy in a proton gradient. This is NADH-quinone oxidoreductase subunit 14 from Paracoccus denitrificans.